A 450-amino-acid chain; its full sequence is Enolase (450 aa).

Gln-167 is a (2R)-2-phosphoglycerate binding site. Glu-209 functions as the Proton donor in the catalytic mechanism. 3 residues coordinate Mg(2+): Asp-250, Glu-307, and Asp-334. (2R)-2-phosphoglycerate-binding residues include Lys-359, Arg-388, Ser-389, and Lys-410. The active-site Proton acceptor is the Lys-359.

Belongs to the enolase family. It depends on Mg(2+) as a cofactor.

It is found in the cytoplasm. Its subcellular location is the secreted. It localises to the cell surface. The enzyme catalyses (2R)-2-phosphoglycerate = phosphoenolpyruvate + H2O. It participates in carbohydrate degradation; glycolysis; pyruvate from D-glyceraldehyde 3-phosphate: step 4/5. Catalyzes the reversible conversion of 2-phosphoglycerate (2-PG) into phosphoenolpyruvate (PEP). It is essential for the degradation of carbohydrates via glycolysis. Its function is as follows. 'Moonlights' as a plasminogen receptor and plasmin activator. Contributes to host (pig) cell adhesion; anti-enolase antibodies decrease binding to porcine kidney cells about 60%. Binds host plasminogen and fibronectin in vitro; enhances the activity of host tissue-specific plasminogen activator (tPA), and helps plasminogen and tPA degrade articifial host extracellular matrices. In Mesomycoplasma hyorhinis (strain HUB-1) (Mycoplasma hyorhinis), this protein is Enolase.